A 62-amino-acid polypeptide reads, in one-letter code: Photosystem II reaction center protein Z (62 aa).

2 helical membrane passes run 8–28 (TVLA…VIFA) and 41–61 (FSGA…NSFV).

It belongs to the PsbZ family. As to quaternary structure, PSII is composed of 1 copy each of membrane proteins PsbA, PsbB, PsbC, PsbD, PsbE, PsbF, PsbH, PsbI, PsbJ, PsbK, PsbL, PsbM, PsbT, PsbY, PsbZ, Psb30/Ycf12, at least 3 peripheral proteins of the oxygen-evolving complex and a large number of cofactors. It forms dimeric complexes.

Its subcellular location is the plastid. It localises to the chloroplast thylakoid membrane. Functionally, may control the interaction of photosystem II (PSII) cores with the light-harvesting antenna, regulates electron flow through the 2 photosystem reaction centers. PSII is a light-driven water plastoquinone oxidoreductase, using light energy to abstract electrons from H(2)O, generating a proton gradient subsequently used for ATP formation. This Mesostigma viride (Green alga) protein is Photosystem II reaction center protein Z.